We begin with the raw amino-acid sequence, 67 residues long: DNA-directed RNA polymerases I, II, and III subunit RPABC5 (67 aa).

Positions 7, 10, 44, and 45 each coordinate Zn(2+).

It belongs to the archaeal Rpo10/eukaryotic RPB10 RNA polymerase subunit family. As to quaternary structure, component of the RNA polymerase I (Pol I), RNA polymerase II (Pol II) and RNA polymerase III (Pol III) complexes consisting of at least 13, 12 and 17 subunits, respectively.

Its subcellular location is the nucleus. Functionally, DNA-dependent RNA polymerase catalyzes the transcription of DNA into RNA using the four ribonucleoside triphosphates as substrates. Common component of RNA polymerases I, II and III which synthesize ribosomal RNA precursors, mRNA precursors and many functional non-coding RNAs, and a small RNAs, such as 5S rRNA and tRNAs, respectively. Pol II is the central component of the basal RNA polymerase II transcription machinery. Pols are composed of mobile elements that move relative to each other. In Pol II, Polr2L is part of the core element with the central large cleft. The sequence is that of DNA-directed RNA polymerases I, II, and III subunit RPABC5 from Drosophila melanogaster (Fruit fly).